The chain runs to 81 residues: Small ribosomal subunit protein bS16 (81 aa).

This sequence belongs to the bacterial ribosomal protein bS16 family.

The sequence is that of Small ribosomal subunit protein bS16 from Desulfotalea psychrophila (strain LSv54 / DSM 12343).